Here is a 363-residue protein sequence, read N- to C-terminus: tRNA-specific 2-thiouridylase MnmA (363 aa).

ATP-binding positions include 6-13 (AMSGGVDS) and Leu32. Cys101 (nucleophile) is an active-site residue. A disulfide bridge links Cys101 with Cys193. Gly125 is a binding site for ATP. The interval 143–145 (KDQ) is interaction with tRNA. The active-site Cysteine persulfide intermediate is the Cys193.

Belongs to the MnmA/TRMU family.

The protein resides in the cytoplasm. The enzyme catalyses S-sulfanyl-L-cysteinyl-[protein] + uridine(34) in tRNA + AH2 + ATP = 2-thiouridine(34) in tRNA + L-cysteinyl-[protein] + A + AMP + diphosphate + H(+). Its function is as follows. Catalyzes the 2-thiolation of uridine at the wobble position (U34) of tRNA, leading to the formation of s(2)U34. This Mycobacterium marinum (strain ATCC BAA-535 / M) protein is tRNA-specific 2-thiouridylase MnmA.